We begin with the raw amino-acid sequence, 284 residues long: Tryptophan synthase alpha chain (284 aa).

Active-site proton acceptor residues include Glu55 and Asp66.

Belongs to the TrpA family. As to quaternary structure, tetramer of two alpha and two beta chains.

It catalyses the reaction (1S,2R)-1-C-(indol-3-yl)glycerol 3-phosphate + L-serine = D-glyceraldehyde 3-phosphate + L-tryptophan + H2O. It participates in amino-acid biosynthesis; L-tryptophan biosynthesis; L-tryptophan from chorismate: step 5/5. Functionally, the alpha subunit is responsible for the aldol cleavage of indoleglycerol phosphate to indole and glyceraldehyde 3-phosphate. This Methanococcus voltae protein is Tryptophan synthase alpha chain.